Reading from the N-terminus, the 1798-residue chain is Focadhesin (1798 aa).

Lys-816 bears the N6-acetyllysine mark.

In terms of assembly, interacts with VCL. As to expression, expressed by glial and neuronal cells in brain.

Its subcellular location is the cell junction. It localises to the focal adhesion. The protein resides in the cytoplasm. The protein localises to the cytosol. Functionally, required for the maintenance of SKIC2 and SKIC3 proteostatic levels in the liver. May be involved in the regulation of RNA degradation by the exosome complex. Potential tumor suppressor in gliomas. This Mus musculus (Mouse) protein is Focadhesin (Focad).